The chain runs to 226 residues: 3-dehydroquinate dehydratase (226 aa).

3-dehydroquinate-binding positions include Glu33–Arg35 and Arg65. Residue His121 is the Proton donor/acceptor of the active site. The Schiff-base intermediate with substrate role is filled by Lys146. 3-dehydroquinate contacts are provided by Arg188, Ser207, and Gln211.

It belongs to the type-I 3-dehydroquinase family. In terms of assembly, homodimer.

The catalysed reaction is 3-dehydroquinate = 3-dehydroshikimate + H2O. The protein operates within metabolic intermediate biosynthesis; chorismate biosynthesis; chorismate from D-erythrose 4-phosphate and phosphoenolpyruvate: step 3/7. Involved in the third step of the chorismate pathway, which leads to the biosynthesis of aromatic amino acids. Catalyzes the cis-dehydration of 3-dehydroquinate (DHQ) and introduces the first double bond of the aromatic ring to yield 3-dehydroshikimate. This Lactococcus lactis subsp. lactis (strain IL1403) (Streptococcus lactis) protein is 3-dehydroquinate dehydratase.